Consider the following 250-residue polypeptide: Probable xyloglucan-specific endo-beta-1,4-glucanase A (250 aa).

An N-terminal signal peptide occupies residues M1–A19. N-linked (GlcNAc...) asparagine glycosylation occurs at N72.

This sequence belongs to the glycosyl hydrolase 12 (cellulase H) family.

Its subcellular location is the secreted. It catalyses the reaction xyloglucan + H2O = xyloglucan oligosaccharides.. Functionally, catalyzes endohydrolysis of 1,4-beta-D-glucosidic linkages in xyloglucan with retention of the beta-configuration of the glycosyl residues. Specific for xyloglucan and does not hydrolyze other cell wall components. This Aspergillus terreus (strain NIH 2624 / FGSC A1156) protein is Probable xyloglucan-specific endo-beta-1,4-glucanase A (xgeA).